The chain runs to 455 residues: MSVILTETNGSDERRKVAIVGAGLVGSLAALYFARMGNQVDLYEYRDDVRKSELVQGRSINLALSQRGRKALSQLGLGLEEQVLSTAIPMKGRMLHNIQGKTSVVIYDPCFKQCLYSVGRKQLNELLLNACDKFPNIKCHFDHKLTKANVKEGQLEFKRSHSVEGVKAKADLIVGCDGAFSALRQNLIKLPGFNYTQEYIETGYLELCIPAKKNEFQMPPNYLHIWPRDNFMMIALPNQDKSFTVTLSMPFDIFASIKNPEELIQFFTQYYPDALPLIGKEQLIKDFFKTKPQHLLSIKCRPYHYENKALLLGDAAHAMVPYYGQGMNAGMEDVTLLNSLLQQLPLEEALAQYTEQRWQDAFAICDLAMYNYVEMRDLTKRWSFRCRKMLDTWLFRLFPTIWVPLYNSVSFTSMPYSKCIANRKWQDQLLWRTFLGFIVVGLGVTGSAIYWQRFR.

The next 2 membrane-spanning stretches (helical) occupy residues tryptophan 393–tyrosine 416 and leucine 429–arginine 453.

It belongs to the aromatic-ring hydroxylase family. KMO subfamily. The cofactor is FAD.

The protein resides in the mitochondrion. The protein localises to the membrane. The catalysed reaction is L-kynurenine + NADPH + O2 + H(+) = 3-hydroxy-L-kynurenine + NADP(+) + H2O. It participates in cofactor biosynthesis; NAD(+) biosynthesis; quinolinate from L-kynurenine: step 1/3. Catalyzes the hydroxylation of L-kynurenine (L-Kyn) to form 3-hydroxy-L-kynurenine (L-3OHKyn). Required for synthesis of quinolinic acid. The sequence is that of Kynurenine 3-monooxygenase from Drosophila willistoni (Fruit fly).